A 52-amino-acid polypeptide reads, in one-letter code: Conotoxin Cal9.2d (52 aa).

Residues 1-6 (KRGVTL) constitute a propeptide that is removed on maturation. Intrachain disulfides connect Cys-14/Cys-31, Cys-19/Cys-41, and Cys-21/Cys-46.

As to expression, expressed by the venom duct.

It localises to the secreted. In terms of biological role, probable neurotoxin with unknown target. Possibly targets ion channels. In Californiconus californicus (California cone), this protein is Conotoxin Cal9.2d.